We begin with the raw amino-acid sequence, 404 residues long: Transcriptional repressor OPI1 (404 aa).

S10 is subject to Phosphoserine. Positions 25 to 51 are disordered; that stretch reads QSCRQKSQPSEDVSQADKMPASESSTT. Over residues 26–37 the composition is skewed to polar residues; it reads SCRQKSQPSEDV. Residues 109–138 are basic motif; that stretch reads KRQKLSRAIAKGKDNLKEYKLNMSIESKKR. Residues 139–160 are leucine-zipper; that stretch reads LVTCLHLLKLANKQLSDKISCL. Disordered stretches follow at residues 170 to 201, 305 to 327, and 378 to 404; these read HPLHKQDGNARTTTGAGEDETSSDEDDDDEEF, LQQQQQKRNKDGDDSASPSSSVT, and QQQQYRQQQQKDGNYVKPSQDNVDSKD. Acidic residues predominate over residues 186–201; sequence GEDETSSDEDDDDEEF. Positions 200–206 match the FFAT motif; sequence EFFDASE. Positions 378–387 are enriched in low complexity; it reads QQQQYRQQQQ. Over residues 394-404 the composition is skewed to polar residues; that stretch reads KPSQDNVDSKD.

As to quaternary structure, interacts with SCS2.

The protein resides in the endoplasmic reticulum. It localises to the nucleus. Functionally, negative regulator of the transcriptional complex INO2-INO4 in response to phospholipid precursor availability. When precursors become limiting, OPI1 is retained at the endoplasmic reticulum (ER) and INO2-INO4 activates INO1 and other genes required for phospholipid biosynthesis, whereas abundant precursor availability results in targeting of OPI1 to the nucleus to repress transcription of these genes. Binds directly to phosphatidic acid, which is required for ER targeting and may act as sensing mechanism for precursor availability, as phosphatidic acid becomes rapidly depleted upon phospholipid biosynthesis. This is Transcriptional repressor OPI1 (OPI1) from Saccharomyces cerevisiae (strain ATCC 204508 / S288c) (Baker's yeast).